We begin with the raw amino-acid sequence, 366 residues long: GDSL esterase/lipase At1g74460 (366 aa).

The signal sequence occupies residues 1–20; sequence MKFCAIFVLFIVLAINGYDC. S30 serves as the catalytic Nucleophile. Residues N113 and N260 are each glycosylated (N-linked (GlcNAc...) asparagine). Catalysis depends on residues D320 and H323.

This sequence belongs to the 'GDSL' lipolytic enzyme family.

It is found in the secreted. The sequence is that of GDSL esterase/lipase At1g74460 from Arabidopsis thaliana (Mouse-ear cress).